The sequence spans 130 residues: Small ribosomal subunit protein uS11c (130 aa).

The protein belongs to the universal ribosomal protein uS11 family. As to quaternary structure, part of the 30S ribosomal subunit.

The protein localises to the plastid. It localises to the chloroplast. This is Small ribosomal subunit protein uS11c from Marsilea quadrifolia (European water clover).